The sequence spans 485 residues: Katanin p60 ATPase-containing subunit A1 (485 aa).

The segment at 101-173 is disordered; that stretch reads HRSSPCVVRK…KNKAEAVETE (73 aa). Basic and acidic residues predominate over residues 141 to 173; it reads NGDKGKPQKSKEKKENPSKPKEDKNKAEAVETE. Residue 244 to 251 participates in ATP binding; the sequence is GPPGTGKT.

It belongs to the AAA ATPase family. Katanin p60 subunit A1 subfamily. Can homooligomerize into hexameric rings, which may be promoted by interaction with microtubules. Interacts with katnb1, which may serve as a targeting subunit.

Its subcellular location is the cytoplasm. It localises to the cytoskeleton. The protein localises to the microtubule organizing center. It is found in the centrosome. The protein resides in the spindle pole. Its subcellular location is the spindle. The enzyme catalyses n ATP + n H2O + a microtubule = n ADP + n phosphate + (n+1) alpha/beta tubulin heterodimers.. With respect to regulation, ATPase activity is stimulated by microtubules, which promote homooligomerization. ATP-dependent microtubule severing is stimulated by interaction with katnb1. In terms of biological role, catalytic subunit of a complex which severs microtubules in an ATP-dependent manner. Microtubule severing may promote rapid reorganization of cellular microtubule arrays and the release of microtubules from the centrosome following nucleation. The polypeptide is Katanin p60 ATPase-containing subunit A1 (katna1) (Danio rerio (Zebrafish)).